We begin with the raw amino-acid sequence, 253 residues long: CD151 antigen (253 aa).

The Cytoplasmic segment spans residues 1–18 (MGEFNEKKATCGTVCLKY). 2 S-palmitoyl cysteine lipidation sites follow: Cys11 and Cys15. The helical transmembrane segment at 19 to 39 (LLFTYNCCFWLAGLAVMAVGI) threads the bilayer. Topologically, residues 40 to 57 (WTLALKSDYISLLASSTY) are extracellular. Residues 58-78 (LATAYILVVAGVVVMVTGVLG) traverse the membrane as a helical segment. Over 79–91 (CCATFKERRNLLR) the chain is Cytoplasmic. A helical transmembrane segment spans residues 92 to 112 (LYFILLLIIFLLEIIAGILAY). The Extracellular segment spans residues 113-221 (VYYQQLNTEL…LETFIQEHLR (109 aa)). The N-linked (GlcNAc...) asparagine glycan is linked to Asn159. Residues 222–242 (VIGAVGIGIACVQVFGMIFTC) form a helical membrane-spanning segment. Residues Cys242 and Cys243 are each lipidated (S-palmitoyl cysteine). The Cytoplasmic portion of the chain corresponds to 243–253 (CLYRSLKLEHY).

The protein belongs to the tetraspanin (TM4SF) family. In terms of assembly, interacts with integrins ITGA3:ITGB1, ITGA5:ITGB1, ITGA3:ITGB1 and ITGA6:ITGB4 and with CD9 and CD181. Interacts (via the second extracellular domain) with integrin ITGAV:ITGB3. Interacts with ITGA3; this interaction modulates ITGA3 glycosylation pattern. Interacts with F11R. Interacts with RAC1 and CDC42; these interactions mediate physical association of RAC1 and CDC42 with integrin adhesion receptor complexes. Palmitoylated. Palmitoylation by ZDHHC2 regulates CD151 expression, association with other tetraspanin family proteins and function in cell adhesion. Post-translationally, ubiquitinated by RNF128 on lysine residues present in the tetraspanin amino terminus via 'Lys-48'-linked ubiquitin leading to proteasomal degradation.

The protein localises to the cell membrane. Functionally, structural component of specialized membrane microdomains known as tetraspanin-enriched microdomains (TERMs), which act as platforms for receptor clustering and signaling. Plays a role in various cellular and molecular mechanism through its association with both integrin and non-integrin proteins. These interactions facilitate critical cellular functions, including cell-to-cell communication, wound healing, platelet aggregation, trafficking, cell motility, and angiogenesis. Via interaction with JAM-A/F11R and integrin ITGA3:ITGB1, promotes the recruitment of signaling molecules such as RAC1, CDC42 and RhoGTPases to facilitate the polarization of epithelial cells and the reorganization of the actin cytoskeleton, which are critical steps in cell migration process. Regulates the glycosylation pattern of ITGA3:ITGB1 thereby modulating its activity. Plays an essential role in the maintenance of central laminin-binding integrin ITGA6:ITGB4-containing adhesion complexes. Essential for the proper assembly of the glomerular and tubular basement membranes in kidney. Contributes to T-cell activation by modulating integrin signaling leading to activation of downstream targets PTK2 and MAPK1/MAPK3. The chain is CD151 antigen (Cd151) from Mus musculus (Mouse).